A 419-amino-acid polypeptide reads, in one-letter code: UDP-N-acetylglucosamine 1-carboxyvinyltransferase (419 aa).

A phosphoenolpyruvate-binding site is contributed by 22 to 23 (KN). A UDP-N-acetyl-alpha-D-glucosamine-binding site is contributed by Arg-95. Cys-119 acts as the Proton donor in catalysis. Cys-119 carries the 2-(S-cysteinyl)pyruvic acid O-phosphothioketal modification. UDP-N-acetyl-alpha-D-glucosamine-binding positions include 164–167 (KVSV), Asp-308, and Ile-330.

Belongs to the EPSP synthase family. MurA subfamily.

It is found in the cytoplasm. It catalyses the reaction phosphoenolpyruvate + UDP-N-acetyl-alpha-D-glucosamine = UDP-N-acetyl-3-O-(1-carboxyvinyl)-alpha-D-glucosamine + phosphate. It participates in cell wall biogenesis; peptidoglycan biosynthesis. In terms of biological role, cell wall formation. Adds enolpyruvyl to UDP-N-acetylglucosamine. The protein is UDP-N-acetylglucosamine 1-carboxyvinyltransferase of Rickettsia prowazekii (strain Madrid E).